A 424-amino-acid chain; its full sequence is Tyrosine--tRNA ligase (424 aa).

Y37 is a binding site for L-tyrosine. Positions P42 to H51 match the 'HIGH' region motif. L-tyrosine contacts are provided by Y175 and Q179. Positions K235–T239 match the 'KMSKS' region motif. ATP is bound at residue K238. In terms of domain architecture, S4 RNA-binding spans A357 to G414.

It belongs to the class-I aminoacyl-tRNA synthetase family. TyrS type 1 subfamily. Homodimer.

The protein localises to the cytoplasm. It carries out the reaction tRNA(Tyr) + L-tyrosine + ATP = L-tyrosyl-tRNA(Tyr) + AMP + diphosphate + H(+). Its function is as follows. Catalyzes the attachment of tyrosine to tRNA(Tyr) in a two-step reaction: tyrosine is first activated by ATP to form Tyr-AMP and then transferred to the acceptor end of tRNA(Tyr). This chain is Tyrosine--tRNA ligase, found in Yersinia pseudotuberculosis serotype O:1b (strain IP 31758).